The primary structure comprises 164 residues: IQ domain-containing protein F2 (164 aa).

IQ domains lie at 43–72 and 99–128; these read RTKAAVKIQAWWRGTLVRRTLLHAALRAWI and RERAVIKLQSLVRMWRVRWRYCQVLNAIYI.

The protein is IQ domain-containing protein F2 (IQCF2) of Homo sapiens (Human).